The chain runs to 593 residues: Glutamyl-tRNA(Gln) amidotransferase subunit B, mitochondrial (593 aa).

A mitochondrion-targeting transit peptide spans 1–49 (MLRPWLRQSTRAARSLPCCQCPRPYSSRLPTLTSPSSSVRRLQTSASES). A compositionally biased stretch (low complexity) spans 27–42 (SRLPTLTSPSSSVRRL). The tract at residues 27–80 (SRLPTLTSPSSSVRRLQTSASESQDRVPLRKQLKQNAKALKAEKRQRRESEEAS) is disordered. The segment covering 66–80 (LKAEKRQRRESEEAS) has biased composition (basic and acidic residues).

This sequence belongs to the GatB/GatE family. GatB subfamily. In terms of assembly, subunit of the heterotrimeric GatCAB amidotransferase (AdT) complex, composed of A, B and C subunits.

It is found in the mitochondrion. The enzyme catalyses L-glutamyl-tRNA(Gln) + L-glutamine + ATP + H2O = L-glutaminyl-tRNA(Gln) + L-glutamate + ADP + phosphate + H(+). Functionally, allows the formation of correctly charged Gln-tRNA(Gln) through the transamidation of misacylated Glu-tRNA(Gln) in the mitochondria. The reaction takes place in the presence of glutamine and ATP through an activated gamma-phospho-Glu-tRNA(Gln). The sequence is that of Glutamyl-tRNA(Gln) amidotransferase subunit B, mitochondrial from Aspergillus oryzae (strain ATCC 42149 / RIB 40) (Yellow koji mold).